The sequence spans 229 residues: MSIKIKNFKKNIIINNNNFINENNCNNNNKNNIVQLCIMGDGGVGKTAVTTQFISNHFVYYYDPTIEDSYRKQICVSDKSYILDILDTAGQDELTAMRDQWIRSCEGFVLVYSITCKSSFNQVLNFREQIIRVLDRDDVPIMMIGNKSDLVNERQVTYHEGKELAQRLGMSFMEVSAKNRSNIDEVFHEAVCCVKRKEELYRIKSKHVKILKKNKNPLKKKINEICKVM.

Residue 40-47 (GDGGVGKT) coordinates GTP. The Effector region motif lies at 62–70 (YDPTIEDSY). Residues 87–91 (DTAGQ) and 146–149 (NKSD) each bind GTP. A Cysteine methyl ester modification is found at cysteine 226. Cysteine 226 carries the S-geranylgeranyl cysteine lipid modification. Residues 227–229 (KVM) constitute a propeptide, removed in mature form.

It belongs to the small GTPase superfamily. Ras family.

The protein resides in the cell membrane. It catalyses the reaction GTP + H2O = GDP + phosphate + H(+). Functionally, ras proteins bind GDP/GTP and possess intrinsic GTPase activity. The polypeptide is Ras-like protein rasV (rasV) (Dictyostelium discoideum (Social amoeba)).